The sequence spans 393 residues: UPF0496 protein At2g18630 (393 aa).

Positions 1-20 (MMGGKSSKSKKNVEFGSPST) are disordered. Positions 149–222 (VNQFEEENED…RLRNIKTWRR (74 aa)) form a coiled coil. Transmembrane regions (helical) follow at residues 226 to 246 (MVFV…AAVA) and 249 to 269 (PVVA…GKWC). Residues 299–356 (KEMDNISILVRKVEVEIESLLKKAEFAITEEKEVRLAIDEIKKKLDVFTETIEELGEH) are a coiled coil.

The protein belongs to the UPF0496 family.

The protein resides in the membrane. This Arabidopsis thaliana (Mouse-ear cress) protein is UPF0496 protein At2g18630.